Here is a 401-residue protein sequence, read N- to C-terminus: Dual-specificity RNA methyltransferase RlmN (401 aa).

Glutamate 114 (proton acceptor) is an active-site residue. The region spanning 120 to 365 (DKTRGTLCVS…TMVRRTRGDD (246 aa)) is the Radical SAM core domain. Cysteine 127 and cysteine 370 are disulfide-bonded. Residues cysteine 134, cysteine 138, and cysteine 141 each contribute to the [4Fe-4S] cluster site. Residues 187-188 (GE), serine 219, 241-243 (SLH), and asparagine 327 each bind S-adenosyl-L-methionine. Cysteine 370 functions as the S-methylcysteine intermediate in the catalytic mechanism.

This sequence belongs to the radical SAM superfamily. RlmN family. Requires [4Fe-4S] cluster as cofactor.

It localises to the cytoplasm. The enzyme catalyses adenosine(2503) in 23S rRNA + 2 reduced [2Fe-2S]-[ferredoxin] + 2 S-adenosyl-L-methionine = 2-methyladenosine(2503) in 23S rRNA + 5'-deoxyadenosine + L-methionine + 2 oxidized [2Fe-2S]-[ferredoxin] + S-adenosyl-L-homocysteine. The catalysed reaction is adenosine(37) in tRNA + 2 reduced [2Fe-2S]-[ferredoxin] + 2 S-adenosyl-L-methionine = 2-methyladenosine(37) in tRNA + 5'-deoxyadenosine + L-methionine + 2 oxidized [2Fe-2S]-[ferredoxin] + S-adenosyl-L-homocysteine. Functionally, specifically methylates position 2 of adenine 2503 in 23S rRNA and position 2 of adenine 37 in tRNAs. m2A2503 modification seems to play a crucial role in the proofreading step occurring at the peptidyl transferase center and thus would serve to optimize ribosomal fidelity. In Stenotrophomonas maltophilia (strain K279a), this protein is Dual-specificity RNA methyltransferase RlmN.